We begin with the raw amino-acid sequence, 244 residues long: Globin-like protein 9 (244 aa).

Residues 1–38 form a disordered region; the sequence is MRRMAKYDRSYSMQDAHGPNGLARRGTQRGCSRSKSTR. The 154-residue stretch at 47–200 folds into the Globin domain; sequence SLTFSQKQAL…LIDELRGGFE (154 aa). Heme-binding residues include His111 and His143.

It belongs to the globin family.

In Caenorhabditis briggsae, this protein is Globin-like protein 9.